The following is a 55-amino-acid chain: MPQLEFAWWIVNFSLIWASVLIVISLLLNSFPPNSAGQSSSSLTLNKTTTNWQWL.

Residues 8–28 (WWIVNFSLIWASVLIVISLLL) traverse the membrane as a helical segment. The interval 34–55 (NSAGQSSSSLTLNKTTTNWQWL) is disordered. Residues 39 to 55 (SSSSLTLNKTTTNWQWL) show a composition bias toward low complexity.

Belongs to the ATPase protein 8 family. F-type ATPases have 2 components, CF(1) - the catalytic core - and CF(0) - the membrane proton channel.

The protein resides in the mitochondrion membrane. In terms of biological role, mitochondrial membrane ATP synthase (F(1)F(0) ATP synthase or Complex V) produces ATP from ADP in the presence of a proton gradient across the membrane which is generated by electron transport complexes of the respiratory chain. F-type ATPases consist of two structural domains, F(1) - containing the extramembraneous catalytic core and F(0) - containing the membrane proton channel, linked together by a central stalk and a peripheral stalk. During catalysis, ATP synthesis in the catalytic domain of F(1) is coupled via a rotary mechanism of the central stalk subunits to proton translocation. Part of the complex F(0) domain. Minor subunit located with subunit a in the membrane. In Strongylocentrotus purpuratus (Purple sea urchin), this protein is ATP synthase protein 8 (MT-ATP8).